The chain runs to 136 residues: Large-conductance mechanosensitive channel (136 aa).

Helical transmembrane passes span 10–30 (FAMR…AAFG) and 76–96 (GVFI…FMAI).

The protein belongs to the MscL family. In terms of assembly, homopentamer.

It localises to the cell inner membrane. Functionally, channel that opens in response to stretch forces in the membrane lipid bilayer. May participate in the regulation of osmotic pressure changes within the cell. This Escherichia coli O127:H6 (strain E2348/69 / EPEC) protein is Large-conductance mechanosensitive channel.